A 434-amino-acid polypeptide reads, in one-letter code: MAMAKNVVVIGAQWGDEGKGKIVDWLAEEAGGVVRFQGGHNAGHTLVVGGKKTILRLIPSGILHESLDCFIGSGVVVSPEALLGEIDELNAAGVKNVEGRLKIAPTCPLILPYHIALDQAREASRGKGKIGTTGRGIGPAYEDKVARRAIRAADLLHPEKLREKLDAILAYYNVQLQHLHNAEPVKAEDVMAVIEKVALRIAPMITDVSRVLNEKNKNGEKLLFEGAQGALLDIDYGTYPFVTSSNCLAGAASAGAGVGPQMLDYVLGIVKAYTTRVGSGPFPTELFDEVGAGLAERGHEFGSVTGRARRCGWFDAAALKRSIQINGISGMCITKLDVMDGVETINICVGYELPDGGKTDILPCGSDAVETCKPIYETMPGWRESTFGVKSYDALPANAKAYLKRIEEVCGAPVAIVSTGPDREETIVLHHPFA.

Residues 15–21 and 43–45 contribute to the GTP site; these read GDEGKGK and GHT. Catalysis depends on D16, which acts as the Proton acceptor. Residues D16 and G43 each coordinate Mg(2+). IMP is bound by residues 16–19, 41–44, T133, R147, Q228, T243, and R307; these read DEGK and NAGH. H44 functions as the Proton donor in the catalytic mechanism. Residue 303-309 coordinates substrate; it reads SVTGRAR. GTP-binding positions include R309, 335–337, and 418–420; these read KLD and STG.

The protein belongs to the adenylosuccinate synthetase family. In terms of assembly, homodimer. Mg(2+) serves as cofactor.

The protein localises to the cytoplasm. The enzyme catalyses IMP + L-aspartate + GTP = N(6)-(1,2-dicarboxyethyl)-AMP + GDP + phosphate + 2 H(+). The protein operates within purine metabolism; AMP biosynthesis via de novo pathway; AMP from IMP: step 1/2. Functionally, plays an important role in the de novo pathway of purine nucleotide biosynthesis. Catalyzes the first committed step in the biosynthesis of AMP from IMP. The chain is Adenylosuccinate synthetase from Neisseria meningitidis serogroup C / serotype 2a (strain ATCC 700532 / DSM 15464 / FAM18).